A 146-amino-acid chain; its full sequence is Hemoglobin subunit beta-S/F (146 aa).

Val-1 is subject to N-acetylvaline. The Globin domain occupies 2-146; sequence HLTDGEKNAI…VANALSHKYH (145 aa). At Ser-44 the chain carries Phosphoserine. Lys-59 bears the N6-acetyllysine mark. Heme b is bound at residue His-63. Lys-82 carries the post-translational modification N6-acetyllysine. Position 92 (His-92) interacts with heme b. Cys-93 carries the S-nitrosocysteine modification. At Lys-144 the chain carries N6-acetyllysine.

Belongs to the globin family. In terms of assembly, heterotetramer of two alpha chains and two beta chains. Red blood cells.

Functionally, involved in oxygen transport from the lung to the various peripheral tissues. The chain is Hemoglobin subunit beta-S/F from Urocitellus townsendii (Townsend's ground squirrel).